A 444-amino-acid polypeptide reads, in one-letter code: Phosphoglucosamine mutase (444 aa).

The active-site Phosphoserine intermediate is the serine 103. Serine 103, aspartate 241, aspartate 243, and aspartate 245 together coordinate Mg(2+). The residue at position 103 (serine 103) is a Phosphoserine.

Belongs to the phosphohexose mutase family. Mg(2+) is required as a cofactor. Post-translationally, activated by phosphorylation.

It carries out the reaction alpha-D-glucosamine 1-phosphate = D-glucosamine 6-phosphate. Catalyzes the conversion of glucosamine-6-phosphate to glucosamine-1-phosphate. The polypeptide is Phosphoglucosamine mutase (Deinococcus geothermalis (strain DSM 11300 / CIP 105573 / AG-3a)).